Consider the following 404-residue polypeptide: Argininosuccinate synthase (404 aa).

Residues 11–19 (AYSGGLDTS) and Ala40 each bind ATP. Tyr92 and Ser97 together coordinate L-citrulline. Gly122 lines the ATP pocket. The L-aspartate site is built by Thr124, Asn128, and Asp129. Asn128 contacts L-citrulline. Residues Arg132, Ser181, Ser190, Glu266, and Tyr278 each coordinate L-citrulline.

Belongs to the argininosuccinate synthase family. Type 1 subfamily. In terms of assembly, homotetramer.

The protein localises to the cytoplasm. It carries out the reaction L-citrulline + L-aspartate + ATP = 2-(N(omega)-L-arginino)succinate + AMP + diphosphate + H(+). It functions in the pathway amino-acid biosynthesis; L-arginine biosynthesis; L-arginine from L-ornithine and carbamoyl phosphate: step 2/3. The polypeptide is Argininosuccinate synthase (Moritella abyssi).